We begin with the raw amino-acid sequence, 302 residues long: MAAKELSHLQQLEAESIQIIREVAAEFDNPVMMYSIGKDSSVMLHLARKAFYPGKIPFPLLHVDTDWKFKEMIAFRDEQAKEFGFELLVHKNPEGLEMGISPFEHGSAKHTDIMKTQGLKQALNKYGFDAAFGGARRDEEKSRAKERVYSFRDKHHTWDPKNQRPELWRTYNGAVNKGESIRVFPLSNWTELDIWQYIYQENIQLVPLYFAQKRPVVERDGMMIMVDDDRMPLAEGEQPKQELVRFRTLGCYPLTGAMHSEADTLEKIIEEMLLTRSSERQGRLIDSDQSASMELKKRQGYF.

The protein belongs to the PAPS reductase family. CysD subfamily. As to quaternary structure, heterodimer composed of CysD, the smaller subunit, and CysN.

It carries out the reaction sulfate + ATP + H(+) = adenosine 5'-phosphosulfate + diphosphate. It participates in sulfur metabolism; hydrogen sulfide biosynthesis; sulfite from sulfate: step 1/3. With CysN forms the ATP sulfurylase (ATPS) that catalyzes the adenylation of sulfate producing adenosine 5'-phosphosulfate (APS) and diphosphate, the first enzymatic step in sulfur assimilation pathway. APS synthesis involves the formation of a high-energy phosphoric-sulfuric acid anhydride bond driven by GTP hydrolysis by CysN coupled to ATP hydrolysis by CysD. The sequence is that of Sulfate adenylyltransferase subunit 2 from Shewanella halifaxensis (strain HAW-EB4).